The following is a 169-amino-acid chain: Protein YABBY 7 (169 aa).

A C4-type zinc finger spans residues 21 to 48 (CSFCATVLLVSVPCSSVLRVVAVQCGHC). Residues 63-122 (SASIELTPQELDAGPPPGEYSDESSGDDREGRDAEDDAPAPAAAAVANKPPGRKQRTPSA) are disordered.

The protein belongs to the YABBY family. As to expression, expressed in leaf sheaths and flowers.

It localises to the nucleus. In Oryza sativa subsp. japonica (Rice), this protein is Protein YABBY 7 (YAB7).